The sequence spans 318 residues: Olfactory receptor 5G26 (318 aa).

Residues 1 to 28 lie on the Extracellular side of the membrane; it reads MMHRNQTVVTEFFFTGLTSSFHLQIVLF. Residue Asn-5 is glycosylated (N-linked (GlcNAc...) asparagine). Residues 29 to 49 traverse the membrane as a helical segment; the sequence is LTFLCVYLATLLGNLGMIILI. The Cytoplasmic portion of the chain corresponds to 50–56; that stretch reads HLDTRLH. A helical membrane pass occupies residues 57-77; that stretch reads IPMYFFLSHLSFVDACSSSVI. At 78 to 93 the chain is on the extracellular side; that stretch reads SPKMLSDMFVDKKVIS. A helical transmembrane segment spans residues 94 to 114; the sequence is FLGCAIQLCLFSQFVVTECFL. Residues Cys-97 and Cys-189 are joined by a disulfide bond. Residues 115–144 are Cytoplasmic-facing; that stretch reads LASMAYDRYVAICKPLLYTLIMSQRVCVQL. Residues 145–165 traverse the membrane as a helical segment; it reads VIGPYSIGFVSTMVHIISAFV. The Extracellular segment spans residues 166–198; the sequence is LPYCGPNLINHFFCDLLPVLSLACANTQMKKRL. A helical transmembrane segment spans residues 199–219; that stretch reads LFIVAGILGVFSGIIILVSYV. The Cytoplasmic portion of the chain corresponds to 220–239; the sequence is YIAITILKISSADGRRKAFS. A helical membrane pass occupies residues 240–260; it reads TCSSHLTAVSILYGTLFFIYV. At 261–271 the chain is on the extracellular side; the sequence is RPSSSFSLDIN. A helical transmembrane segment spans residues 272–292; it reads KVVSLFYTTVIPMLNPFIYSL. Over 293–318 the chain is Cytoplasmic; that stretch reads RNKEVKDALIRTFEKQFCYSFQDKIL.

The protein belongs to the G-protein coupled receptor 1 family.

Its subcellular location is the cell membrane. In terms of biological role, potential odorant receptor. This is Olfactory receptor 5G26 from Mus musculus (Mouse).